Consider the following 311-residue polypeptide: Methionyl-tRNA formyltransferase (311 aa).

Residue 110 to 113 participates in (6S)-5,6,7,8-tetrahydrofolate binding; it reads SLLP.

The protein belongs to the Fmt family.

It catalyses the reaction L-methionyl-tRNA(fMet) + (6R)-10-formyltetrahydrofolate = N-formyl-L-methionyl-tRNA(fMet) + (6S)-5,6,7,8-tetrahydrofolate + H(+). Attaches a formyl group to the free amino group of methionyl-tRNA(fMet). The formyl group appears to play a dual role in the initiator identity of N-formylmethionyl-tRNA by promoting its recognition by IF2 and preventing the misappropriation of this tRNA by the elongation apparatus. The polypeptide is Methionyl-tRNA formyltransferase (Streptococcus equi subsp. zooepidemicus (strain H70)).